Consider the following 346-residue polypeptide: Low specificity L-threonine aldolase (346 aa).

Lys207 is modified (N6-(pyridoxal phosphate)lysine).

The protein belongs to the threonine aldolase family. Homotetramer. Pyridoxal 5'-phosphate is required as a cofactor.

It carries out the reaction L-threonine = acetaldehyde + glycine. The enzyme catalyses L-allo-threonine = acetaldehyde + glycine. Catalyzes the cleavage of L-allo-threonine and L-threonine to glycine and acetaldehyde. In Pseudomonas aeruginosa (strain ATCC 15692 / DSM 22644 / CIP 104116 / JCM 14847 / LMG 12228 / 1C / PRS 101 / PAO1), this protein is Low specificity L-threonine aldolase (ltaE).